The primary structure comprises 180 residues: dCTP deaminase, dUMP-forming (180 aa).

Residues 100 to 105, Asp117, 125 to 127, Gln146, Tyr160, and Gln167 contribute to the dCTP site; these read RSSLGR and TLE. The active-site Proton donor/acceptor is the Glu127.

It belongs to the dCTP deaminase family. In terms of assembly, homotrimer.

The enzyme catalyses dCTP + 2 H2O = dUMP + NH4(+) + diphosphate. It functions in the pathway pyrimidine metabolism; dUMP biosynthesis; dUMP from dCTP: step 1/1. Functionally, bifunctional enzyme that catalyzes both the deamination of dCTP to dUTP and the hydrolysis of dUTP to dUMP without releasing the toxic dUTP intermediate. This Sulfurihydrogenibium sp. (strain YO3AOP1) protein is dCTP deaminase, dUMP-forming.